Reading from the N-terminus, the 330-residue chain is MKLALDGMGGDNAPKSVIEGALLALEQIPNLEIQLYGQQEKLEPFLKQHDRLTIVPCEEVVEGTDDPARAVRRKKDSSMARMMDAVDEGRADACLSAGNTGALMAGGLFKVGRIEGIARPALATTLPTLDGKGFLMLDLGANADARPEHLVPYAIMGDIYAKKVGGLQKPRIGLLNIGTEDKKGNELTKATFDLLKEANLNFIGNVEARDLLEGVADVVVTDGFTGNMVLKSIEGTAGALFSMLKEAFMSSTKTKISAVLMKNNLRDLKHKMDYTEYGGAGLFGLQAPVIKAHGSSNAKAIFSAIRQANTMVEHTVISTITETVRHIEID.

It belongs to the PlsX family. Homodimer. Probably interacts with PlsY.

Its subcellular location is the cytoplasm. It catalyses the reaction a fatty acyl-[ACP] + phosphate = an acyl phosphate + holo-[ACP]. Its pathway is lipid metabolism; phospholipid metabolism. Catalyzes the reversible formation of acyl-phosphate (acyl-PO(4)) from acyl-[acyl-carrier-protein] (acyl-ACP). This enzyme utilizes acyl-ACP as fatty acyl donor, but not acyl-CoA. The polypeptide is Phosphate acyltransferase (Lysinibacillus sphaericus (strain C3-41)).